A 504-amino-acid polypeptide reads, in one-letter code: ATP synthase subunit alpha, chloroplastic (504 aa).

170–177 (GDRQTGKT) is a binding site for ATP.

Belongs to the ATPase alpha/beta chains family. As to quaternary structure, F-type ATPases have 2 components, CF(1) - the catalytic core - and CF(0) - the membrane proton channel. CF(1) has five subunits: alpha(3), beta(3), gamma(1), delta(1), epsilon(1). CF(0) has four main subunits: a, b, b' and c.

It is found in the plastid. It localises to the chloroplast thylakoid membrane. It carries out the reaction ATP + H2O + 4 H(+)(in) = ADP + phosphate + 5 H(+)(out). Its function is as follows. Produces ATP from ADP in the presence of a proton gradient across the membrane. The alpha chain is a regulatory subunit. The chain is ATP synthase subunit alpha, chloroplastic from Pyropia yezoensis (Susabi-nori).